The sequence spans 395 residues: Na(+)/H(+) antiporter NhaA (395 aa).

11 helical membrane passes run 15-35, 66-86, 101-121, 132-152, 161-181, 184-204, 219-239, 265-285, 301-321, 339-359, and 366-386; these read FLGS…AGFV, IDAW…ILEI, VALP…TYLL, GWAI…LALG, AWLM…IAVF, NALY…LIGA, CILL…AGVI, ALTP…NVGV, LGIM…ATLL, VFGL…IANL, and LVIP…LAGW.

Belongs to the NhaA Na(+)/H(+) (TC 2.A.33) antiporter family.

The protein localises to the cell inner membrane. It catalyses the reaction Na(+)(in) + 2 H(+)(out) = Na(+)(out) + 2 H(+)(in). Functionally, na(+)/H(+) antiporter that extrudes sodium in exchange for external protons. The sequence is that of Na(+)/H(+) antiporter NhaA from Gluconacetobacter diazotrophicus (strain ATCC 49037 / DSM 5601 / CCUG 37298 / CIP 103539 / LMG 7603 / PAl5).